A 63-amino-acid polypeptide reads, in one-letter code: Large ribosomal subunit protein bL28A (63 aa).

The protein belongs to the bacterial ribosomal protein bL28 family.

The chain is Large ribosomal subunit protein bL28A from Nocardia farcinica (strain IFM 10152).